Consider the following 332-residue polypeptide: Palmitoyltransferase ZDHHC15B (332 aa).

Over 1 to 14 (MALSRALRCCQRIF) the chain is Cytoplasmic. The helical transmembrane segment at 15 to 35 (SWIPVIIISSVVLWSYYAYVF) threads the bilayer. Residues 36–50 (ELCFVTLSNNLERVT) lie on the Lumenal side of the membrane. A helical membrane pass occupies residues 51–71 (YLLIFHVCFIMFCWTYWKAIF). Topologically, residues 72 to 166 (TPPSTPTKKF…NNCVGFSNYK (95 aa)) are cytoplasmic. Residues 123 to 173 (RFCDRCQVIKPDRCHHCSVCETCVLKMDHHCPWVNNCVGFSNYKFFLLFLS) enclose the DHHC domain. Zn(2+)-binding residues include cysteine 125 and cysteine 128. Lysine 132 is a substrate binding site. Residues histidine 138, cysteine 139, cysteine 142, cysteine 145, and histidine 152 each contribute to the Zn(2+) site. Cysteine 153 acts as the S-palmitoyl cysteine intermediate in catalysis. A Zn(2+)-binding site is contributed by cysteine 159. A helical membrane pass occupies residues 167-187 (FFLLFLSYSMIYCVFIASTVF). The Lumenal portion of the chain corresponds to 188–204 (QYFLKFWVGDLPNGPAK). A helical membrane pass occupies residues 205–228 (FHVLFLLFVALMFFVSLMFLFGYH). The Cytoplasmic segment spans residues 229 to 332 (CWLVAKNRST…GSSLLIRTES (104 aa)). The segment at 305 to 332 (EEKWVEDGGSDEESADENGSSLLIRTES) is disordered.

Belongs to the DHHC palmitoyltransferase family. Post-translationally, autopalmitoylated (in vitro).

The protein localises to the golgi apparatus membrane. It is found in the postsynaptic density. It catalyses the reaction L-cysteinyl-[protein] + hexadecanoyl-CoA = S-hexadecanoyl-L-cysteinyl-[protein] + CoA. The catalysed reaction is L-cysteinyl-[protein] + tetradecanoyl-CoA = S-tetradecanoyl-L-cysteinyl-[protein] + CoA. It carries out the reaction L-cysteinyl-[protein] + octadecanoyl-CoA = S-octadecanoyl-L-cysteinyl-[protein] + CoA. Its function is as follows. Palmitoyltransferase that catalyzes the addition of palmitate onto various protein substrates. Has no stringent fatty acid selectivity and in addition to palmitate can also transfer onto target proteins myristate from tetradecanoyl-CoA and stearate from octadecanoyl-CoA. May thereby regulate target proteins association and localization to membranes. In the nervous system, probably catalyzes the palmitoylation of synaptic proteins and is involved in the differentiation of dopaminergic neurons and the development of the diencephalon. This chain is Palmitoyltransferase ZDHHC15B (zdhhc15b), found in Danio rerio (Zebrafish).